Consider the following 296-residue polypeptide: GTPase Era (296 aa).

Positions 7–174 (KCSMSAIVGA…VDYLCETSPY (168 aa)) constitute an Era-type G domain. The G1 stretch occupies residues 15-22 (GATNAGKS). GTP is bound at residue 15–22 (GATNAGKS). The tract at residues 41–45 (QTTRV) is G2. The tract at residues 62–65 (DTPG) is G3. Residues 62 to 66 (DTPGI) and 124 to 127 (NKID) contribute to the GTP site. Residues 124–127 (NKID) are G4. Positions 153–155 (ISA) are G5. The KH type-2 domain maps to 205–282 (LRHELPYSLS…HLFLFVKVRE (78 aa)).

The protein belongs to the TRAFAC class TrmE-Era-EngA-EngB-Septin-like GTPase superfamily. Era GTPase family. As to quaternary structure, monomer.

The protein resides in the cytoplasm. It localises to the cell inner membrane. Its function is as follows. An essential GTPase that binds both GDP and GTP, with rapid nucleotide exchange. Plays a role in 16S rRNA processing and 30S ribosomal subunit biogenesis and possibly also in cell cycle regulation and energy metabolism. The polypeptide is GTPase Era (Ehrlichia ruminantium (strain Welgevonden)).